The following is a 627-amino-acid chain: Spindle assembly abnormal protein 6 homolog (627 aa).

One can recognise a PISA domain in the interval 39–91; that stretch reads VHRKDLVVRLTDDTDLYFLYNLIISEEDFQSLKVQQGLLIDFTSFPQKFIDLL. Residues 153 to 473 adopt a coiled-coil conformation; sequence LASCLSSVKE…SREVLKTNEN (321 aa). 2 disordered regions span residues 187–257 and 561–586; these read QTLS…LQTK and EVSP…SKYF. Over residues 191–201 the composition is skewed to basic and acidic residues; it reads EKSRELDKLRS. Positions 202-213 are enriched in polar residues; it reads EWTSQTTSLSSR. Over residues 214 to 226 the composition is skewed to basic and acidic residues; it reads HMQDLTAEREKAL. Over residues 229–238 the composition is skewed to low complexity; sequence QSRLQQQNEQ.

Nine homodimers form a cartwheel structure with an internal diameter of 23 nM and radial spokes connecting to the microtubule triplets.

The protein localises to the cytoplasm. The protein resides in the cytoskeleton. Its subcellular location is the microtubule organizing center. It localises to the centrosome. Its function is as follows. Central scaffolding component of the centrioles ensuring their 9-fold symmetry. Required for centrosome biogenesis and duplication: required both for mother-centriole-dependent centriole duplication and deuterosome-dependent centriole amplification in multiciliated cells. The sequence is that of Spindle assembly abnormal protein 6 homolog (sass6) from Danio rerio (Zebrafish).